The sequence spans 550 residues: Ribosomal large subunit pseudouridine synthase B (550 aa).

An S4 RNA-binding domain is found at 28–97 (ERLHKVLAQA…PSRVLIYNKP (70 aa)). The Nucleophile role is filled by Asp-132. Positions 294-550 (KSTVHVSRDG…RPPGGGNRGR (257 aa)) are disordered. Residues 317-334 (DEGRELRRFDNLREDRGR) show a composition bias toward basic and acidic residues. 3 stretches are compositionally biased toward gly residues: residues 420 to 451 (GPGGARPGTGGPVGARSGGPGRGAGGGQGQSQ), 490 to 501 (PSGGRPGPGGNR), and 509 to 550 (GPGG…NRGR).

The protein belongs to the pseudouridine synthase RsuA family.

It catalyses the reaction uridine(2605) in 23S rRNA = pseudouridine(2605) in 23S rRNA. In terms of biological role, responsible for synthesis of pseudouridine from uracil-2605 in 23S ribosomal RNA. This chain is Ribosomal large subunit pseudouridine synthase B (rluB), found in Xanthomonas axonopodis pv. citri (strain 306).